A 128-amino-acid polypeptide reads, in one-letter code: 3-aminoacrylate deaminase RutC (128 aa).

It belongs to the RutC family. As to quaternary structure, homotrimer.

It catalyses the reaction (Z)-3-aminoacrylate + H2O + H(+) = 3-oxopropanoate + NH4(+). Functionally, involved in pyrimidine catabolism. Catalyzes the deamination of 3-aminoacrylate to malonic semialdehyde, a reaction that can also occur spontaneously. RutC may facilitate the reaction and modulate the metabolic fitness, rather than catalyzing essential functions. The sequence is that of 3-aminoacrylate deaminase RutC from Escherichia coli O103:H2 (strain 12009 / EHEC).